The following is a 119-amino-acid chain: Microtubule nucleation factor SSNA1 (119 aa).

N-acetylthreonine is present on Thr-2. Residues 2-32 (TQQGAALQNYNNELVKCIEELCQKREELCRQ) are important for localization to the centrosome. Residues 13 to 70 (NELVKCIEELCQKREELCRQIQQEEDEKQRLQNEVRQLTEKLARVNENLARKIASRNE) are a coiled coil.

Belongs to the SSNA1 family. In terms of assembly, self-associates to form fibrils. Also forms dimers as well as monomers. Interacts with SPAST.

It localises to the nucleus. It is found in the cytoplasm. The protein localises to the cytoskeleton. Its subcellular location is the microtubule organizing center. The protein resides in the centrosome. It localises to the centriole. It is found in the midbody. The protein localises to the flagellum basal body. Its subcellular location is the flagellum axoneme. The protein resides in the cell projection. It localises to the axon. Functionally, microtubule-binding protein which stabilizes dynamic microtubules by slowing growth and shrinkage at both plus and minus ends and serves as a sensor of microtubule damage, protecting microtubules from the microtubule-severing enzyme SPAST. Induces microtubule branching which is mediated by the formation of long SSNA1 fibrils which guide microtubule protofilaments to split apart from the mother microtubule and form daughter microtubules. Plays a role in axon outgrowth and branching. Required for cell division. In Mus musculus (Mouse), this protein is Microtubule nucleation factor SSNA1.